The following is a 286-amino-acid chain: Pyridoxine 4-dehydrogenase (286 aa).

The active-site Proton donor is Y59. F210 to L218 lines the NADP(+) pocket.

It belongs to the aldo/keto reductase family. Aldo/keto reductase 2 subfamily.

The enzyme catalyses pyridoxine + NADP(+) = pyridoxal + NADPH + H(+). The catalysed reaction is pyridoxine + NAD(+) = pyridoxal + NADH + H(+). Its function is as follows. Catalyzes the NAD(P)H-dependent reduction of pyridoxal to pyridoxine in vitro. Is not able to reduce 4-pyridoxate, and to oxidize pyridoxine or pyridoxamine. Has Kemp eliminase activity towards the non-physiological substrate 5-nitrobenzisoxazole, producing 4-nitro-2-cyanophenol; this activity is not considered to be physiologically relevant. The polypeptide is Pyridoxine 4-dehydrogenase (Escherichia coli (strain K12)).